The primary structure comprises 224 residues: N-terminal Xaa-Pro-Lys N-methyltransferase 1 (224 aa).

S-adenosyl-L-methionine contacts are provided by residues glycine 70, arginine 75, 92-94 (DVT), 120-121 (LQ), and glutamine 136.

This sequence belongs to the methyltransferase superfamily. NTM1 family.

It localises to the nucleus. It catalyses the reaction N-terminal L-alanyl-L-prolyl-L-lysyl-[protein] + 3 S-adenosyl-L-methionine = N-terminal N,N,N-trimethyl-L-alanyl-L-prolyl-L-lysyl-[protein] + 3 S-adenosyl-L-homocysteine + 3 H(+). It carries out the reaction N-terminal L-seryl-L-prolyl-L-lysyl-[protein] + 3 S-adenosyl-L-methionine = N-terminal N,N,N-trimethyl-L-seryl-L-prolyl-L-lysyl-[protein] + 3 S-adenosyl-L-homocysteine + 3 H(+). The enzyme catalyses N-terminal L-prolyl-L-prolyl-L-lysyl-[protein] + 2 S-adenosyl-L-methionine = N-terminal N,N-dimethyl-L-prolyl-L-prolyl-L-lysyl-[protein] + 2 S-adenosyl-L-homocysteine + 2 H(+). Functionally, distributive alpha-N-methyltransferase that methylates the N-terminus of target proteins containing the N-terminal motif [Ala/Gly/Pro/Ser]-Pro-Lys when the initiator Met is cleaved. Specifically catalyzes mono-, di- or tri-methylation of the exposed alpha-amino group of the Ala, Gly or Ser residue in the [Ala/Gly/Ser]-Pro-Lys motif and mono- or di-methylation of Pro in the Pro-Pro-Lys motif. Required during mitosis for normal bipolar spindle formation and chromosome segregation via its action on target proteins. The protein is N-terminal Xaa-Pro-Lys N-methyltransferase 1 (ntmt1) of Xenopus tropicalis (Western clawed frog).